A 461-amino-acid polypeptide reads, in one-letter code: MSVRIEHDTFGEIEVPADKYWGAQTERSKRNFPVGKERMPIEVVYGFAQLKRAAALANFDLGKLSEAKKDAIVYACDQILSGELDEHFPLVVWQTGSGTQSNMNVNEVVSYVANMYLKDHQIDESIHPNDDVNKSQSSNDTFPTAMHVALYQEVETKLEPALKLLRNTLKEKEDKFDSIIKIGRTHLQDATPIKLGQEISGWRYMLDRCEIMLSESKKHILNLAIGGTAVGTGINAHPEFGDKVAHYISENTGYPFVSSENKFHALTAHDEVVQLHGTLKALAGDLMKIANDVRWLASGPRAGLAEISIPENEPGSSIMPGKVNPTQCEMLTMVAVQVMGNDTVVGFASSQGNFELNVYKPVIMHNTLQSIYLLADGMETFNNNCAVGIEPIEENIDNYLNQSLMLVTALNPHIGYEKAAQIAKKAHKEGLTLKESAIQTGYVTEEQFEAWIKPEDMVDPH.

Substrate is bound by residues 97–99 (SGT), 127–130 (HPND), 137–139 (SSN), and T185. H186 serves as the catalytic Proton donor/acceptor. The active site involves S316. Residues S317 and 322-324 (KVN) each bind substrate.

It belongs to the class-II fumarase/aspartase family. Fumarase subfamily. As to quaternary structure, homotetramer.

The protein resides in the cytoplasm. It carries out the reaction (S)-malate = fumarate + H2O. It participates in carbohydrate metabolism; tricarboxylic acid cycle; (S)-malate from fumarate: step 1/1. Involved in the TCA cycle. Catalyzes the stereospecific interconversion of fumarate to L-malate. The chain is Fumarate hydratase class II from Staphylococcus aureus (strain MSSA476).